The primary structure comprises 481 residues: MGVFRFISISLAAVSAANAAQILSMPHAQTVPNSYIVMMKDDTSDDDFNHHQSWLQSTHTHNITRRATVQNAGMRHKYNFHKMKGYSGVFDDETIKDIAKDPKVMFVEPDTIISVHGKVDQNNVPSWGLARISSSKPGTQDYTYDSSAGEGITVYSVDTGVDINHEDFEGRAIWGSNQVNDGDDNDRSGHGTHTSGTMVGKEFGIAKKAKLVAVKVLGNDGSGPTSGIVAGINWCVEHARQNGGTNKAVMNMSLGGGSSSALNRAAAQAVEQGMFLSVAAGNDNTDARSSSPASEPSVCTVGASAEDDSRSSFSNWGPSLDLFAPGSNIISARPGGGSQSMSGTSMAAPHVAGLAAYLMALEGISGGAVCDRLKQLGSASISDVGPGTPTNVLINNGGAKGDGKSPKPSPKPSHPSEPQQPTEPQQPAPGEPSTPAPAPMPPTPQHPHTPFPGGDDFDFDGFWKKYFGGEHWRKMFSSFFN.

The first 19 residues, 1–19, serve as a signal peptide directing secretion; the sequence is MGVFRFISISLAAVSAANA. A propeptide spanning residues 20-116 is cleaved from the precursor; the sequence is AQILSMPHAQ…VEPDTIISVH (97 aa). An Inhibitor I9 domain is found at 34–115; it reads SYIVMMKDDT…FVEPDTIISV (82 aa). The Peptidase S8 domain occupies 126 to 400; sequence SWGLARISSS…NVLINNGGAK (275 aa). Active-site charge relay system residues include D158 and H190. Residues 175 to 198 form a disordered region; it reads GSNQVNDGDDNDRSGHGTHTSGTM. N251 carries an N-linked (GlcNAc...) asparagine glycan. The disordered stretch occupies residues 281–312; the sequence is GNDNTDARSSSPASEPSVCTVGASAEDDSRSS. Residues 282 to 294 show a composition bias toward polar residues; that stretch reads NDNTDARSSSPAS. S345 acts as the Charge relay system in catalysis. Residues 379–455 form a disordered region; it reads ASISDVGPGT…HPHTPFPGGD (77 aa). Residues 424–450 are compositionally biased toward pro residues; sequence PQQPAPGEPSTPAPAPMPPTPQHPHTP.

This sequence belongs to the peptidase S8 family.

The protein resides in the secreted. In terms of biological role, secreted subtilisin-like serine protease with keratinolytic activity that contributes to pathogenicity. The chain is Subtilisin-like protease 1 (SUB1) from Arthroderma gypseum (strain ATCC MYA-4604 / CBS 118893) (Microsporum gypseum).